An 87-amino-acid polypeptide reads, in one-letter code: U3-theraphotoxin-Hhn1a 8 (87 aa).

An N-terminal signal peptide occupies residues 1 to 24 (MVNMKASMFLTFAGLVLLFVVCYA). Positions 25–52 (SGSEEKEFPKEMLSSIFAVDNDFKQEER) are excised as a propeptide. 3 cysteine pairs are disulfide-bonded: Cys-54–Cys-67, Cys-61–Cys-72, and Cys-66–Cys-79.

It belongs to the neurotoxin 10 (Hwtx-1) family. 51 (Hntx-8) subfamily. Hntx-8 sub-subfamily. In terms of tissue distribution, expressed by the venom gland.

It is found in the secreted. Its function is as follows. Ion channel inhibitor. This chain is U3-theraphotoxin-Hhn1a 8, found in Cyriopagopus hainanus (Chinese bird spider).